A 72-amino-acid chain; its full sequence is Translation initiation factor IF-1 1 (72 aa).

The 72-residue stretch at 1–72 folds into the S1-like domain; the sequence is MSKDDVIQMA…TRARIIFRAK (72 aa).

Belongs to the IF-1 family. In terms of assembly, component of the 30S ribosomal translation pre-initiation complex which assembles on the 30S ribosome in the order IF-2 and IF-3, IF-1 and N-formylmethionyl-tRNA(fMet); mRNA recruitment can occur at any time during PIC assembly.

It is found in the cytoplasm. Its function is as follows. One of the essential components for the initiation of protein synthesis. Stabilizes the binding of IF-2 and IF-3 on the 30S subunit to which N-formylmethionyl-tRNA(fMet) subsequently binds. Helps modulate mRNA selection, yielding the 30S pre-initiation complex (PIC). Upon addition of the 50S ribosomal subunit IF-1, IF-2 and IF-3 are released leaving the mature 70S translation initiation complex. The polypeptide is Translation initiation factor IF-1 1 (Polynucleobacter asymbioticus (strain DSM 18221 / CIP 109841 / QLW-P1DMWA-1) (Polynucleobacter necessarius subsp. asymbioticus)).